The chain runs to 622 residues: DNA mismatch repair protein MutL (622 aa).

The protein belongs to the DNA mismatch repair MutL/HexB family.

In terms of biological role, this protein is involved in the repair of mismatches in DNA. It is required for dam-dependent methyl-directed DNA mismatch repair. May act as a 'molecular matchmaker', a protein that promotes the formation of a stable complex between two or more DNA-binding proteins in an ATP-dependent manner without itself being part of a final effector complex. The chain is DNA mismatch repair protein MutL from Phenylobacterium zucineum (strain HLK1).